Consider the following 327-residue polypeptide: MYQSLMTVRETQIAIKEVKTFFEDQLAKRLELFRVSAPLFVTKKSGLNDHLNGVERPIEFDMLHSGEELEIVHSLAKWKRFALHEYGYEAGEGLYTNMNAIRRDEELDATHSIYVDQWDWEKIVQKEWRTVDYLQKTVQTIYGIFKDLEDHLFEKYPFLGKYLPEEIVFITSQELEDKYPELTPKDREHAIAKEHGAVFIIGIGDALRSGEKHDGRAADYDDWKLNGDILFWHPVLQSSFELSSMGIRVDSKSLDEQLTKTGEDFKREYDFHKGILEDVLPLTIGGGIGQSRMCMYFLRKAHIGEVQSSVWPDDLRAACKKENIHLF.

It belongs to the class-II aminoacyl-tRNA synthetase family. AsnA subfamily.

It is found in the cytoplasm. The enzyme catalyses L-aspartate + NH4(+) + ATP = L-asparagine + AMP + diphosphate + H(+). It functions in the pathway amino-acid biosynthesis; L-asparagine biosynthesis; L-asparagine from L-aspartate (ammonia route): step 1/1. In Bacillus cereus (strain G9842), this protein is Aspartate--ammonia ligase.